Consider the following 334-residue polypeptide: uncharacterized protein (334 aa).

It belongs to the PAPS reductase family.

This is an uncharacterized protein from Escherichia phage 186 (Bacteriophage 186).